The chain runs to 226 residues: Small ribosomal subunit protein uS3 (226 aa).

Residues 39 to 107 form the KH type-2 domain; that stretch reads VRKFLNKELR…PAQINISEVR (69 aa).

This sequence belongs to the universal ribosomal protein uS3 family. Part of the 30S ribosomal subunit. Forms a tight complex with proteins S10 and S14.

Binds the lower part of the 30S subunit head. Binds mRNA in the 70S ribosome, positioning it for translation. In Idiomarina loihiensis (strain ATCC BAA-735 / DSM 15497 / L2-TR), this protein is Small ribosomal subunit protein uS3.